Consider the following 837-residue polypeptide: Thioredoxin domain-containing protein 3 homolog (837 aa).

One can recognise a Thioredoxin domain in the interval 6–115 (EQIQLQKEIL…LKNVERELKQ (110 aa)). A disulfide bridge connects residues Cys39 and Cys42. NDK regions lie at residues 201–345 (KEVT…SVPI), 355–491 (IEKT…FPKQ), and 493–629 (TLAV…EVLP). The tract at residues 633–837 (VKDSVASISM…EEKTEEQTAS (205 aa)) is disordered. A compositionally biased stretch (polar residues) spans 638–647 (ASISMEQSQV). A compositionally biased stretch (acidic residues) spans 652 to 670 (EEGGEEQTEQPAGEGEEQQ). Low complexity-rich tracts occupy residues 671-707 (AEQPAAESGEQQAEGGEPATETATEGGEQQAEQPPAE), 718-752 (QQTQEGETPAADEAQAEQTQEGETPAADEAQAEQT), and 766-787 (APATEETAAEQAPAAEETQQTQ). The segment covering 805 to 819 (AGGGEEAVATEGGGE) has biased composition (gly residues). Basic and acidic residues predominate over residues 820–837 (GDAKPEGGEEKTEEQTAS).

It in the C-terminal section; belongs to the NDK family. In terms of assembly, monomer. In terms of tissue distribution, testis-specific. In sperm, it is a component of the arm dynein of sperm axoneme.

Probably required during the final stages of sperm tail maturation in the testis and/or epididymis, where extensive disulfide bonding of fibrous sheath (FS) proteins occurs. In vitro, it has neither nucleoside diphosphate kinase (NDPK) activity nor reducing activity on disulfide bonds. Exhibits a 3'-5' exonuclease activity with a preference for single-stranded DNA, suggesting roles in DNA proofreading and repair. The polypeptide is Thioredoxin domain-containing protein 3 homolog (NME8) (Heliocidaris crassispina (Sea urchin)).